The following is a 78-amino-acid chain: Pro-glucagon (78 aa).

Belongs to the glucagon family.

The protein localises to the secreted. Its function is as follows. Plays a key role in glucose metabolism and homeostasis. Regulates blood glucose by increasing gluconeogenesis and decreasing glycolysis. The sequence is that of Pro-glucagon (gcg) from Atractosteus spatula (Alligator gar).